A 133-amino-acid chain; its full sequence is Holo-[acyl-carrier-protein] synthase (133 aa).

Mg(2+) contacts are provided by aspartate 8 and glutamate 57.

This sequence belongs to the P-Pant transferase superfamily. AcpS family. Requires Mg(2+) as cofactor.

It localises to the cytoplasm. The catalysed reaction is apo-[ACP] + CoA = holo-[ACP] + adenosine 3',5'-bisphosphate + H(+). Functionally, transfers the 4'-phosphopantetheine moiety from coenzyme A to a Ser of acyl-carrier-protein. The sequence is that of Holo-[acyl-carrier-protein] synthase from Caulobacter sp. (strain K31).